The following is a 423-amino-acid chain: Tumor necrosis factor receptor superfamily member 19 (423 aa).

The signal sequence occupies residues 1–29 (MALKVLLEQEKTFFTLLVLLGYLSCKVTC). Residues 30 to 170 (ESGDCRQQEF…TASSPRDTAL (141 aa)) lie on the Extracellular side of the membrane. TNFR-Cys repeat units lie at residues 33–72 (DCRQ…DAQC), 74–114 (TCRL…DAIC), and 116–149 (DCLP…EPHC). Cystine bridges form between Cys-34–Cys-46, Cys-49–Cys-62, Cys-52–Cys-72, Cys-75–Cys-89, Cys-92–Cys-106, Cys-95–Cys-114, Cys-117–Cys-135, and Cys-138–Cys-149. Residue Asn-105 is glycosylated (N-linked (GlcNAc...) asparagine). The chain crosses the membrane as a helical span at residues 171–191 (AAVICSALATVLLALLILCVI). The Cytoplasmic segment spans residues 192–423 (YCKRQFMEKK…LQVRQRLGSL (232 aa)).

As to quaternary structure, associates with TRAF1, TRAF2, TRAF3 and TRAF5. Interacts with LINGO1. As to expression, highly expressed in prostate. Detected at lower levels in thymus, spleen, testis, uterus, small intestine, colon and peripheral blood leukocytes.

Its subcellular location is the membrane. In terms of biological role, can mediate activation of JNK and NF-kappa-B. May promote caspase-independent cell death. This chain is Tumor necrosis factor receptor superfamily member 19 (TNFRSF19), found in Homo sapiens (Human).